A 485-amino-acid polypeptide reads, in one-letter code: MFS-type transporter phm3 (485 aa).

The disordered stretch occupies residues 1–22 (MSLQDPTKEHNNTSPSPKDEKT). Helical transmembrane passes span 55–75 (FTLY…LLVA), 83–103 (IVAS…PFLL), 113–133 (LWLY…CALS), 144–164 (FICG…IADL), 175–195 (ALFG…GGFV), 203–223 (WTFY…AVIM), 278–298 (PIVL…YLLF), 317–337 (GLAF…FAIL), 357–377 (LVLM…YGWS), 384–404 (WIVP…ILMP), 421–441 (ALAV…LAGP), and 449–469 (LGWG…VPFV).

It belongs to the major facilitator superfamily.

It localises to the cell membrane. MFS-type transporter; part of the gene cluster that mediates the biosynthesis of the trans-fused decalin-containing tetramic acid phomasetin. This chain is MFS-type transporter phm3, found in Pyrenochaetopsis sp.